Consider the following 113-residue polypeptide: uncharacterized protein (113 aa).

This is an uncharacterized protein from Acanthamoeba polyphaga mimivirus (APMV).